Reading from the N-terminus, the 214-residue chain is Thiamine-phosphate synthase (214 aa).

4-amino-2-methyl-5-(diphosphooxymethyl)pyrimidine is bound by residues 37-41 and Asn69; that span reads QLRDK. Mg(2+) is bound by residues Asp70 and Asp89. A 4-amino-2-methyl-5-(diphosphooxymethyl)pyrimidine-binding site is contributed by Ser108. 2-[(2R,5Z)-2-carboxy-4-methylthiazol-5(2H)-ylidene]ethyl phosphate is bound at residue 134-136; sequence TDS. Lys137 is a 4-amino-2-methyl-5-(diphosphooxymethyl)pyrimidine binding site. Residues Gly167 and 187–188 contribute to the 2-[(2R,5Z)-2-carboxy-4-methylthiazol-5(2H)-ylidene]ethyl phosphate site; that span reads IS.

This sequence belongs to the thiamine-phosphate synthase family. Requires Mg(2+) as cofactor.

The enzyme catalyses 2-[(2R,5Z)-2-carboxy-4-methylthiazol-5(2H)-ylidene]ethyl phosphate + 4-amino-2-methyl-5-(diphosphooxymethyl)pyrimidine + 2 H(+) = thiamine phosphate + CO2 + diphosphate. The catalysed reaction is 2-(2-carboxy-4-methylthiazol-5-yl)ethyl phosphate + 4-amino-2-methyl-5-(diphosphooxymethyl)pyrimidine + 2 H(+) = thiamine phosphate + CO2 + diphosphate. It carries out the reaction 4-methyl-5-(2-phosphooxyethyl)-thiazole + 4-amino-2-methyl-5-(diphosphooxymethyl)pyrimidine + H(+) = thiamine phosphate + diphosphate. It participates in cofactor biosynthesis; thiamine diphosphate biosynthesis; thiamine phosphate from 4-amino-2-methyl-5-diphosphomethylpyrimidine and 4-methyl-5-(2-phosphoethyl)-thiazole: step 1/1. In terms of biological role, condenses 4-methyl-5-(beta-hydroxyethyl)thiazole monophosphate (THZ-P) and 2-methyl-4-amino-5-hydroxymethyl pyrimidine pyrophosphate (HMP-PP) to form thiamine monophosphate (TMP). This chain is Thiamine-phosphate synthase, found in Natronomonas pharaonis (strain ATCC 35678 / DSM 2160 / CIP 103997 / JCM 8858 / NBRC 14720 / NCIMB 2260 / Gabara) (Halobacterium pharaonis).